Consider the following 139-residue polypeptide: D-ribose pyranase (139 aa).

Catalysis depends on His-20, which acts as the Proton donor. Substrate-binding positions include Asp-28, His-106, and 128–130; that span reads YAN.

The protein belongs to the RbsD / FucU family. RbsD subfamily. In terms of assembly, homodecamer.

The protein resides in the cytoplasm. The catalysed reaction is beta-D-ribopyranose = beta-D-ribofuranose. Its pathway is carbohydrate metabolism; D-ribose degradation; D-ribose 5-phosphate from beta-D-ribopyranose: step 1/2. In terms of biological role, catalyzes the interconversion of beta-pyran and beta-furan forms of D-ribose. This is D-ribose pyranase from Serratia proteamaculans (strain 568).